The chain runs to 94 residues: DNA-directed RNA polymerase subunit omega (94 aa).

The protein belongs to the RNA polymerase subunit omega family. In terms of assembly, the RNAP catalytic core consists of 2 alpha, 1 beta, 1 beta' and 1 omega subunit. When a sigma factor is associated with the core the holoenzyme is formed, which can initiate transcription.

It carries out the reaction RNA(n) + a ribonucleoside 5'-triphosphate = RNA(n+1) + diphosphate. In terms of biological role, promotes RNA polymerase assembly. Latches the N- and C-terminal regions of the beta' subunit thereby facilitating its interaction with the beta and alpha subunits. The polypeptide is DNA-directed RNA polymerase subunit omega (Shewanella pealeana (strain ATCC 700345 / ANG-SQ1)).